A 312-amino-acid polypeptide reads, in one-letter code: Ribose-phosphate pyrophosphokinase (312 aa).

Residues 34 to 36 (DGE) and 93 to 94 (RQ) each bind ATP. H128 and D167 together coordinate Mg(2+). K191 is a catalytic residue. 2 residues coordinate D-ribose 5-phosphate: R193 and D217.

Belongs to the ribose-phosphate pyrophosphokinase family. Class I subfamily. As to quaternary structure, homohexamer. Mg(2+) is required as a cofactor.

Its subcellular location is the cytoplasm. The enzyme catalyses D-ribose 5-phosphate + ATP = 5-phospho-alpha-D-ribose 1-diphosphate + AMP + H(+). It functions in the pathway metabolic intermediate biosynthesis; 5-phospho-alpha-D-ribose 1-diphosphate biosynthesis; 5-phospho-alpha-D-ribose 1-diphosphate from D-ribose 5-phosphate (route I): step 1/1. Involved in the biosynthesis of the central metabolite phospho-alpha-D-ribosyl-1-pyrophosphate (PRPP) via the transfer of pyrophosphoryl group from ATP to 1-hydroxyl of ribose-5-phosphate (Rib-5-P). In Baumannia cicadellinicola subsp. Homalodisca coagulata, this protein is Ribose-phosphate pyrophosphokinase.